A 117-amino-acid chain; its full sequence is cAMP-regulated phosphoprotein 19-B (117 aa).

Over residues 1–37 (MSRDNQEIKAPEESSAEEQKEMDDKVTSPEKAEEIKL) the composition is skewed to basic and acidic residues. The interval 1–54 (MSRDNQEIKAPEESSAEEQKEMDDKVTSPEKAEEIKLKSRYPNIGPKPGGSDFL) is disordered. Residue Ser-28 is modified to Phosphoserine; by CDK2. Residue Ser-67 is modified to Phosphoserine; by GWL. A disordered region spans residues 77–117 (MKNKQLPTAAPDKTEVTGDHIPTPQDLPQRKPSLVASKLAG). At Thr-99 the chain carries Phosphothreonine; by CDK2. Ser-109 carries the post-translational modification Phosphoserine; by PKA.

It belongs to the endosulfine family. Interacts (when phosphorylated at Ser-67) with ppp2r2d. Post-translationally, phosphorylation at Ser-67 by gwl during mitosis is essential for interaction with ppp2r2d (PR55-delta) and subsequent inactivation of PP2A.

The protein localises to the cytoplasm. Protein phosphatase inhibitor that specifically inhibits protein phosphatase 2A (PP2A) during mitosis. When phosphorylated at Ser-67 during mitosis, specifically interacts with ppp2r2d (PR55-delta) and inhibits its activity, leading to inactivation of PP2A, an essential condition to keep cyclin-B1-CDK1 activity high during M phase. The protein is cAMP-regulated phosphoprotein 19-B (arpp19-b) of Xenopus laevis (African clawed frog).